The sequence spans 259 residues: Deoxyribose-phosphate aldolase (259 aa).

Asp102 (proton donor/acceptor) is an active-site residue. Lys167 serves as the catalytic Schiff-base intermediate with acetaldehyde. The active-site Proton donor/acceptor is Lys201.

Belongs to the DeoC/FbaB aldolase family. DeoC type 2 subfamily.

It localises to the cytoplasm. The enzyme catalyses 2-deoxy-D-ribose 5-phosphate = D-glyceraldehyde 3-phosphate + acetaldehyde. It functions in the pathway carbohydrate degradation; 2-deoxy-D-ribose 1-phosphate degradation; D-glyceraldehyde 3-phosphate and acetaldehyde from 2-deoxy-alpha-D-ribose 1-phosphate: step 2/2. Functionally, catalyzes a reversible aldol reaction between acetaldehyde and D-glyceraldehyde 3-phosphate to generate 2-deoxy-D-ribose 5-phosphate. This chain is Deoxyribose-phosphate aldolase, found in Photorhabdus laumondii subsp. laumondii (strain DSM 15139 / CIP 105565 / TT01) (Photorhabdus luminescens subsp. laumondii).